A 192-amino-acid polypeptide reads, in one-letter code: RNA pyrophosphohydrolase (192 aa).

Residues 6–149 (GYRPNVGIVI…KKDVYRKVMK (144 aa)) form the Nudix hydrolase domain. Positions 38-59 (GGINDNETAEQAMYRELYEEAG) match the Nudix box motif.

This sequence belongs to the Nudix hydrolase family. RppH subfamily. A divalent metal cation is required as a cofactor.

In terms of biological role, accelerates the degradation of transcripts by removing pyrophosphate from the 5'-end of triphosphorylated RNA, leading to a more labile monophosphorylated state that can stimulate subsequent ribonuclease cleavage. This is RNA pyrophosphohydrolase from Histophilus somni (strain 129Pt) (Haemophilus somnus).